We begin with the raw amino-acid sequence, 478 residues long: Sulfate adenylyltransferase subunit 1 (478 aa).

Residues 24 to 240 (KSLLRFLTCG…VLENVDIDAD (217 aa)) form the tr-type G domain. The tract at residues 33 to 40 (GSVDDGKS) is G1. 33–40 (GSVDDGKS) is a binding site for GTP. Positions 91–95 (GITID) are G2. A G3 region spans residues 112–115 (DTPG). GTP-binding positions include 112 to 116 (DTPGH) and 167 to 170 (NKMD). The G4 stretch occupies residues 167 to 170 (NKMD). Residues 206–208 (SAL) form a G5 region.

The protein belongs to the TRAFAC class translation factor GTPase superfamily. Classic translation factor GTPase family. CysN/NodQ subfamily. As to quaternary structure, heterodimer composed of CysD, the smaller subunit, and CysN.

It carries out the reaction sulfate + ATP + H(+) = adenosine 5'-phosphosulfate + diphosphate. Its pathway is sulfur metabolism; hydrogen sulfide biosynthesis; sulfite from sulfate: step 1/3. In terms of biological role, with CysD forms the ATP sulfurylase (ATPS) that catalyzes the adenylation of sulfate producing adenosine 5'-phosphosulfate (APS) and diphosphate, the first enzymatic step in sulfur assimilation pathway. APS synthesis involves the formation of a high-energy phosphoric-sulfuric acid anhydride bond driven by GTP hydrolysis by CysN coupled to ATP hydrolysis by CysD. This is Sulfate adenylyltransferase subunit 1 from Aliivibrio fischeri (strain ATCC 700601 / ES114) (Vibrio fischeri).